The primary structure comprises 199 residues: NADH-quinone oxidoreductase subunit C (199 aa).

This sequence belongs to the complex I 30 kDa subunit family. In terms of assembly, NDH-1 is composed of 14 different subunits. Subunits NuoB, C, D, E, F, and G constitute the peripheral sector of the complex.

It localises to the cell membrane. The enzyme catalyses a quinone + NADH + 5 H(+)(in) = a quinol + NAD(+) + 4 H(+)(out). Functionally, NDH-1 shuttles electrons from NADH, via FMN and iron-sulfur (Fe-S) centers, to quinones in the respiratory chain. The immediate electron acceptor for the enzyme in this species is believed to be ubiquinone. Couples the redox reaction to proton translocation (for every two electrons transferred, four hydrogen ions are translocated across the cytoplasmic membrane), and thus conserves the redox energy in a proton gradient. The chain is NADH-quinone oxidoreductase subunit C from Polynucleobacter asymbioticus (strain DSM 18221 / CIP 109841 / QLW-P1DMWA-1) (Polynucleobacter necessarius subsp. asymbioticus).